A 169-amino-acid chain; its full sequence is Ribosome maturation factor RimM (169 aa).

The PRC barrel domain maps to 94–167 (ENEFYFHEII…KITIEVMEGL (74 aa)).

The protein belongs to the RimM family. Binds ribosomal protein uS19.

It is found in the cytoplasm. Its function is as follows. An accessory protein needed during the final step in the assembly of 30S ribosomal subunit, possibly for assembly of the head region. Essential for efficient processing of 16S rRNA. May be needed both before and after RbfA during the maturation of 16S rRNA. It has affinity for free ribosomal 30S subunits but not for 70S ribosomes. This chain is Ribosome maturation factor RimM, found in Listeria welshimeri serovar 6b (strain ATCC 35897 / DSM 20650 / CCUG 15529 / CIP 8149 / NCTC 11857 / SLCC 5334 / V8).